A 467-amino-acid chain; its full sequence is UDP-glycosyltransferase 71D2 (467 aa).

UDP-alpha-D-glucose is bound by residues Ser283, 339–341, 356–364, and 378–381; these read SPQ, HCGWNSIVE, and YAEQ.

The protein belongs to the UDP-glycosyltransferase family.

The chain is UDP-glycosyltransferase 71D2 (UGT71D2) from Arabidopsis thaliana (Mouse-ear cress).